Consider the following 336-residue polypeptide: DNA-directed RNA polymerase subunit alpha (336 aa).

An alpha N-terminal domain (alpha-NTD) region spans residues 1-226 (MLIAQRPTLS…ELFGLARELN (226 aa)). Positions 243–336 (LAADMALPIE…SDDAFGDDEL (94 aa)) are alpha C-terminal domain (alpha-CTD).

It belongs to the RNA polymerase alpha chain family. In terms of assembly, homodimer. The RNAP catalytic core consists of 2 alpha, 1 beta, 1 beta' and 1 omega subunit. When a sigma factor is associated with the core the holoenzyme is formed, which can initiate transcription.

It carries out the reaction RNA(n) + a ribonucleoside 5'-triphosphate = RNA(n+1) + diphosphate. DNA-dependent RNA polymerase catalyzes the transcription of DNA into RNA using the four ribonucleoside triphosphates as substrates. The sequence is that of DNA-directed RNA polymerase subunit alpha from Renibacterium salmoninarum (strain ATCC 33209 / DSM 20767 / JCM 11484 / NBRC 15589 / NCIMB 2235).